Consider the following 394-residue polypeptide: 1-deoxy-D-xylulose 5-phosphate reductoisomerase (394 aa).

Residues threonine 10, glycine 11, serine 12, isoleucine 13, glycine 38, arginine 39, asparagine 40, and asparagine 123 each coordinate NADPH. Lysine 124 serves as a coordination point for 1-deoxy-D-xylulose 5-phosphate. Glutamate 125 contacts NADPH. Aspartate 149 lines the Mn(2+) pocket. 1-deoxy-D-xylulose 5-phosphate contacts are provided by serine 150, glutamate 151, serine 175, and histidine 198. Position 151 (glutamate 151) interacts with Mn(2+). Glycine 204 provides a ligand contact to NADPH. 4 residues coordinate 1-deoxy-D-xylulose 5-phosphate: serine 211, asparagine 216, lysine 217, and glutamate 220. Glutamate 220 contributes to the Mn(2+) binding site.

Belongs to the DXR family. Mg(2+) is required as a cofactor. It depends on Mn(2+) as a cofactor.

It catalyses the reaction 2-C-methyl-D-erythritol 4-phosphate + NADP(+) = 1-deoxy-D-xylulose 5-phosphate + NADPH + H(+). It participates in isoprenoid biosynthesis; isopentenyl diphosphate biosynthesis via DXP pathway; isopentenyl diphosphate from 1-deoxy-D-xylulose 5-phosphate: step 1/6. Functionally, catalyzes the NADPH-dependent rearrangement and reduction of 1-deoxy-D-xylulose-5-phosphate (DXP) to 2-C-methyl-D-erythritol 4-phosphate (MEP). The polypeptide is 1-deoxy-D-xylulose 5-phosphate reductoisomerase (Cereibacter sphaeroides (strain KD131 / KCTC 12085) (Rhodobacter sphaeroides)).